A 428-amino-acid polypeptide reads, in one-letter code: Gamma-glutamyl phosphate reductase (428 aa).

It belongs to the gamma-glutamyl phosphate reductase family.

It is found in the cytoplasm. The catalysed reaction is L-glutamate 5-semialdehyde + phosphate + NADP(+) = L-glutamyl 5-phosphate + NADPH + H(+). It functions in the pathway amino-acid biosynthesis; L-proline biosynthesis; L-glutamate 5-semialdehyde from L-glutamate: step 2/2. Catalyzes the NADPH-dependent reduction of L-glutamate 5-phosphate into L-glutamate 5-semialdehyde and phosphate. The product spontaneously undergoes cyclization to form 1-pyrroline-5-carboxylate. This chain is Gamma-glutamyl phosphate reductase, found in Zymomonas mobilis subsp. mobilis (strain ATCC 31821 / ZM4 / CP4).